Here is a 292-residue protein sequence, read N- to C-terminus: 2-(5''-triphosphoribosyl)-3'-dephosphocoenzyme-A synthase (292 aa).

The protein belongs to the CitG/MdcB family.

It catalyses the reaction 3'-dephospho-CoA + ATP = 2'-(5''-triphospho-alpha-D-ribosyl)-3'-dephospho-CoA + adenine. Catalyzes the formation of 2-(5''-triphosphoribosyl)-3'-dephosphocoenzyme-A, the precursor of the prosthetic group of the holo-acyl carrier protein (gamma chain) of citrate lyase, from ATP and dephospho-CoA. This Escherichia coli (strain SMS-3-5 / SECEC) protein is 2-(5''-triphosphoribosyl)-3'-dephosphocoenzyme-A synthase.